Consider the following 425-residue polypeptide: Serine--tRNA ligase (425 aa).

229-231 (TSE) provides a ligand contact to L-serine. ATP is bound by residues 259 to 261 (RKE) and Val275. Residue Glu282 coordinates L-serine. 349–352 (EITS) is an ATP binding site. Residue Thr384 participates in L-serine binding.

It belongs to the class-II aminoacyl-tRNA synthetase family. Type-1 seryl-tRNA synthetase subfamily. Homodimer. The tRNA molecule binds across the dimer.

The protein localises to the cytoplasm. It catalyses the reaction tRNA(Ser) + L-serine + ATP = L-seryl-tRNA(Ser) + AMP + diphosphate + H(+). The catalysed reaction is tRNA(Sec) + L-serine + ATP = L-seryl-tRNA(Sec) + AMP + diphosphate + H(+). The protein operates within aminoacyl-tRNA biosynthesis; selenocysteinyl-tRNA(Sec) biosynthesis; L-seryl-tRNA(Sec) from L-serine and tRNA(Sec): step 1/1. Its function is as follows. Catalyzes the attachment of serine to tRNA(Ser). Is also able to aminoacylate tRNA(Sec) with serine, to form the misacylated tRNA L-seryl-tRNA(Sec), which will be further converted into selenocysteinyl-tRNA(Sec). This chain is Serine--tRNA ligase, found in Borreliella afzelii (strain PKo) (Borrelia afzelii).